Here is a 261-residue protein sequence, read N- to C-terminus: Cytochrome c oxidase subunit 3 (261 aa).

Residues 1-15 (MTHQTHAYHMVNPSP) are Mitochondrial matrix-facing. The chain crosses the membrane as a helical span at residues 16-34 (WPLTGALSALLMTSGLIMW). Over 35–40 (FHYNSM) the chain is Mitochondrial intermembrane. Residues 41–66 (SLLTLGFTTNLLTMYQWWRDVIREGT) traverse the membrane as a helical segment. At 67–72 (FQGHHT) the chain is on the mitochondrial matrix side. The helical transmembrane segment at 73–105 (PIVQKGLRYGMVLFIVSEVFFFAGFFWAFYHSS) threads the bilayer. Over 106 to 128 (LAPTPELGGCWPPTGIIPLNPLE) the chain is Mitochondrial intermembrane. Residues 129 to 152 (VPLLNTSVLLASGVSITWAHHSLM) traverse the membrane as a helical segment. Residues 153 to 155 (EGN) are Mitochondrial matrix-facing. A helical transmembrane segment spans residues 156–183 (RKHMLQALFITISLGVYFTLLQASEYYE). The Mitochondrial intermembrane segment spans residues 184–190 (TSFTISD). The helical transmembrane segment at 191 to 223 (GVYGSTFFMATGFHGLHVIIGSTFLIVCFLRQL) threads the bilayer. Residues 224–232 (YYHFTSNHH) lie on the Mitochondrial matrix side of the membrane. Residues 233–256 (FGFEAAAWYWHFVDVVWLFLYVSI) form a helical membrane-spanning segment. Residues 257–261 (YWWGS) are Mitochondrial intermembrane-facing.

Belongs to the cytochrome c oxidase subunit 3 family. As to quaternary structure, component of the cytochrome c oxidase (complex IV, CIV), a multisubunit enzyme composed of 14 subunits. The complex is composed of a catalytic core of 3 subunits MT-CO1, MT-CO2 and MT-CO3, encoded in the mitochondrial DNA, and 11 supernumerary subunits COX4I, COX5A, COX5B, COX6A, COX6B, COX6C, COX7A, COX7B, COX7C, COX8 and NDUFA4, which are encoded in the nuclear genome. The complex exists as a monomer or a dimer and forms supercomplexes (SCs) in the inner mitochondrial membrane with NADH-ubiquinone oxidoreductase (complex I, CI) and ubiquinol-cytochrome c oxidoreductase (cytochrome b-c1 complex, complex III, CIII), resulting in different assemblies (supercomplex SCI(1)III(2)IV(1) and megacomplex MCI(2)III(2)IV(2)).

The protein localises to the mitochondrion inner membrane. The enzyme catalyses 4 Fe(II)-[cytochrome c] + O2 + 8 H(+)(in) = 4 Fe(III)-[cytochrome c] + 2 H2O + 4 H(+)(out). Functionally, component of the cytochrome c oxidase, the last enzyme in the mitochondrial electron transport chain which drives oxidative phosphorylation. The respiratory chain contains 3 multisubunit complexes succinate dehydrogenase (complex II, CII), ubiquinol-cytochrome c oxidoreductase (cytochrome b-c1 complex, complex III, CIII) and cytochrome c oxidase (complex IV, CIV), that cooperate to transfer electrons derived from NADH and succinate to molecular oxygen, creating an electrochemical gradient over the inner membrane that drives transmembrane transport and the ATP synthase. Cytochrome c oxidase is the component of the respiratory chain that catalyzes the reduction of oxygen to water. Electrons originating from reduced cytochrome c in the intermembrane space (IMS) are transferred via the dinuclear copper A center (CU(A)) of subunit 2 and heme A of subunit 1 to the active site in subunit 1, a binuclear center (BNC) formed by heme A3 and copper B (CU(B)). The BNC reduces molecular oxygen to 2 water molecules using 4 electrons from cytochrome c in the IMS and 4 protons from the mitochondrial matrix. This is Cytochrome c oxidase subunit 3 (MT-CO3) from Canis lupus (Gray wolf).